A 346-amino-acid polypeptide reads, in one-letter code: Phosphate acyltransferase (346 aa).

This sequence belongs to the PlsX family. In terms of assembly, homodimer. Probably interacts with PlsY.

It localises to the cytoplasm. It catalyses the reaction a fatty acyl-[ACP] + phosphate = an acyl phosphate + holo-[ACP]. It participates in lipid metabolism; phospholipid metabolism. Its function is as follows. Catalyzes the reversible formation of acyl-phosphate (acyl-PO(4)) from acyl-[acyl-carrier-protein] (acyl-ACP). This enzyme utilizes acyl-ACP as fatty acyl donor, but not acyl-CoA. The protein is Phosphate acyltransferase of Pelobacter propionicus (strain DSM 2379 / NBRC 103807 / OttBd1).